The sequence spans 107 residues: UPF0145 protein Ent638_1382 (107 aa).

This sequence belongs to the UPF0145 family.

This Enterobacter sp. (strain 638) protein is UPF0145 protein Ent638_1382.